The sequence spans 282 residues: Bifunctional protein FolD (282 aa).

NADP(+) contacts are provided by residues 165–167 and Ser-190; that span reads GRS.

The protein belongs to the tetrahydrofolate dehydrogenase/cyclohydrolase family. In terms of assembly, homodimer.

The enzyme catalyses (6R)-5,10-methylene-5,6,7,8-tetrahydrofolate + NADP(+) = (6R)-5,10-methenyltetrahydrofolate + NADPH. The catalysed reaction is (6R)-5,10-methenyltetrahydrofolate + H2O = (6R)-10-formyltetrahydrofolate + H(+). It participates in one-carbon metabolism; tetrahydrofolate interconversion. Functionally, catalyzes the oxidation of 5,10-methylenetetrahydrofolate to 5,10-methenyltetrahydrofolate and then the hydrolysis of 5,10-methenyltetrahydrofolate to 10-formyltetrahydrofolate. The chain is Bifunctional protein FolD from Acinetobacter baumannii (strain ATCC 17978 / DSM 105126 / CIP 53.77 / LMG 1025 / NCDC KC755 / 5377).